Consider the following 64-residue polypeptide: Small ribosomal subunit protein bS21 (64 aa).

This sequence belongs to the bacterial ribosomal protein bS21 family.

This Oenococcus oeni (strain ATCC BAA-331 / PSU-1) protein is Small ribosomal subunit protein bS21.